The following is a 476-amino-acid chain: Splicing factor ESS-2 homolog (476 aa).

At methionine 1 the chain carries N-acetylmethionine. Positions 1 to 18 (METPGASASSLLLPAASR) are enriched in low complexity. Disordered stretches follow at residues 1-36 (METPGASASSLLLPAASRPPRKREAGEAGAATSKQR) and 91-148 (LGKM…LPSL). Phosphothreonine is present on threonine 3. Acidic residues predominate over residues 133–142 (DGEAGEEEEK). Lysine 142 participates in a covalent cross-link: Glycyl lysine isopeptide (Lys-Gly) (interchain with G-Cter in SUMO2). Serine 292 carries the phosphoserine modification. Phosphothreonine is present on threonine 386. Phosphoserine occurs at positions 391 and 395. A disordered region spans residues 413 to 465 (ALRASYTPSPARSTHLKTPASGLQTPTSTPAPGSATRTPLTQDPASITDNLLQ). Residues 437 to 451 (TPTSTPAPGSATRTP) are compositionally biased toward low complexity. The span at 452-463 (LTQDPASITDNL) shows a compositional bias: polar residues.

Belongs to the ESS2 family. In terms of assembly, identified in the spliceosome C complex. Interacts with FRA10AC1. In terms of tissue distribution, highly expressed in heart, brain and skeletal muscle. Detected at low levels in placenta.

It localises to the nucleus. May be involved in pre-mRNA splicing. The polypeptide is Splicing factor ESS-2 homolog (Homo sapiens (Human)).